A 916-amino-acid chain; its full sequence is Protein translocase subunit SecA (916 aa).

Residues Q88, 106 to 110 (GEGKT), and D519 each bind ATP. Zn(2+) contacts are provided by C902, C904, C913, and C914.

This sequence belongs to the SecA family. Monomer and homodimer. Part of the essential Sec protein translocation apparatus which comprises SecA, SecYEG and auxiliary proteins SecDF. Other proteins may also be involved. It depends on Zn(2+) as a cofactor.

The protein localises to the cell inner membrane. Its subcellular location is the cytoplasm. The catalysed reaction is ATP + H2O + cellular proteinSide 1 = ADP + phosphate + cellular proteinSide 2.. In terms of biological role, part of the Sec protein translocase complex. Interacts with the SecYEG preprotein conducting channel. Has a central role in coupling the hydrolysis of ATP to the transfer of proteins into and across the cell membrane, serving as an ATP-driven molecular motor driving the stepwise translocation of polypeptide chains across the membrane. In Treponema pallidum (strain Nichols), this protein is Protein translocase subunit SecA.